A 444-amino-acid chain; its full sequence is Putative methylesterase 13, chloroplastic (444 aa).

Disordered regions lie at residues 1 to 32 (MGNS…KYKY), 49 to 90 (PSLS…KDSH), and 124 to 176 (SVVY…QLVD). Residues 1–60 (MGNSFTCISHEQEQRPKKSSGGGGNNSGKYKYVRRLSLMPSFRRRTLLPSLSCSGSSSTS) constitute a chloroplast transit peptide. Low complexity predominate over residues 49 to 64 (PSLSCSGSSSTSSSKK). Over residues 65-82 (GGIKAKTKKIRERHHHHH) the composition is skewed to basic residues. Polar residues predominate over residues 124–148 (SVVYPSAQPSGTSSGPVSAVQTPKK). A compositionally biased stretch (low complexity) spans 149–164 (SSAGFVRSSSSRQRSS). The region spanning 190–310 (FVLVHGGGFG…LFNQQLGSND (121 aa)) is the AB hydrolase-1 domain. The active-site Acyl-ester intermediate is Asp-264. Active-site charge relay system residues include Asp-390 and His-418.

Belongs to the AB hydrolase superfamily. Methylesterase family.

Its subcellular location is the plastid. It localises to the chloroplast. Putative methylesterase. The polypeptide is Putative methylesterase 13, chloroplastic (Arabidopsis thaliana (Mouse-ear cress)).